The primary structure comprises 207 residues: Fibroblast growth factor 18 (207 aa).

Residues 1–27 (MYSAPSTCTCLCLHFLLLCFQVQVLAA) form the signal peptide. N-linked (GlcNAc...) asparagine glycosylation is present at N39. A disulfide bond links C109 and C127. N-linked (GlcNAc...) asparagine glycosylation occurs at N137.

Belongs to the heparin-binding growth factors family. In terms of assembly, interacts with FGFR3 and FGFR4.

The protein localises to the secreted. Plays an important role in the regulation of cell proliferation, cell differentiation and cell migration. Required for normal ossification and bone development. Stimulates hepatic and intestinal proliferation. This is Fibroblast growth factor 18 (FGF18) from Bos taurus (Bovine).